A 64-amino-acid polypeptide reads, in one-letter code: DGYIRGSNGCKVSCLWGNEGCNKECRAYGASYGYCWTWGLACWCEGLPDDKTWKSESNTCGRKK.

The LCN-type CS-alpha/beta domain maps to 1–61; sequence DGYIRGSNGC…TWKSESNTCG (61 aa). 4 cysteine pairs are disulfide-bonded: C10/C60, C14/C35, C21/C42, and C25/C44. Residue C60 is modified to Cysteine amide.

It belongs to the long (4 C-C) scorpion toxin superfamily. Sodium channel inhibitor family. Beta subfamily. Expressed by the venom gland.

It is found in the secreted. Depressant insect beta-toxins cause a transient contraction paralysis followed by a slow flaccid paralysis. They bind voltage-independently at site-4 of sodium channels (Nav) and shift the voltage of activation toward more negative potentials thereby affecting sodium channel activation and promoting spontaneous and repetitive firing. This chain is Toxin BmKIT3, found in Olivierus martensii (Manchurian scorpion).